The chain runs to 130 residues: Calcitonin gene-related peptide 2 (130 aa).

Residues Met-1–Ala-26 form the signal peptide. Residues Ala-27–Lys-82 constitute a propeptide that is removed on maturation. Cys-85 and Cys-90 form a disulfide bridge. Phe-120 is modified (phenylalanine amide). The propeptide occupies Asp-127–Ala-130.

The protein belongs to the calcitonin family. As to expression, detected in nerve cells of cerebrum, hippocampus and pons/midbrain in newborns, and only in nerve cells of pons/midbrain in adult.

Its subcellular location is the secreted. Functionally, CALCB/CGRP2 is a peptide hormone that induces vasodilation mediated by the CALCRL-RAMP1 receptor complex. Dilates a variety of vessels including the coronary, cerebral and systemic vasculature. Its abundance in the CNS also points toward a neurotransmitter or neuromodulator role. This Mus musculus (Mouse) protein is Calcitonin gene-related peptide 2.